We begin with the raw amino-acid sequence, 89 residues long: Defensin-like protein 103 (89 aa).

A signal peptide spans 1 to 24 (MAITRKNLVAFCFTILFIISSIHC). 4 disulfide bridges follow: C46-C84, C52-C75, C61-C82, and C65-C83.

Belongs to the DEFL family.

It localises to the secreted. The polypeptide is Defensin-like protein 103 (Arabidopsis thaliana (Mouse-ear cress)).